We begin with the raw amino-acid sequence, 326 residues long: Phospho-N-acetylmuramoyl-pentapeptide-transferase (326 aa).

9 consecutive transmembrane segments (helical) span residues 3–23 (ISIS…PAFI), 51–71 (TMGG…FALF), 79–99 (VGMI…DDFL), 115–135 (LALQ…GGDI), 138–158 (VFGY…FWLV), 169–189 (GVDG…GVIA), 195–215 (MDIL…FIFN), 221–243 (VFMG…MALH), and 306–326 (FFFW…LYLM).

This sequence belongs to the glycosyltransferase 4 family. MraY subfamily. The cofactor is Mg(2+).

The protein resides in the cell membrane. It carries out the reaction UDP-N-acetyl-alpha-D-muramoyl-L-alanyl-gamma-D-glutamyl-L-lysyl-D-alanyl-D-alanine + di-trans,octa-cis-undecaprenyl phosphate = Mur2Ac(oyl-L-Ala-gamma-D-Glu-L-Lys-D-Ala-D-Ala)-di-trans,octa-cis-undecaprenyl diphosphate + UMP. Its pathway is cell wall biogenesis; peptidoglycan biosynthesis. Its function is as follows. Catalyzes the initial step of the lipid cycle reactions in the biosynthesis of the cell wall peptidoglycan: transfers peptidoglycan precursor phospho-MurNAc-pentapeptide from UDP-MurNAc-pentapeptide onto the lipid carrier undecaprenyl phosphate, yielding undecaprenyl-pyrophosphoryl-MurNAc-pentapeptide, known as lipid I. The sequence is that of Phospho-N-acetylmuramoyl-pentapeptide-transferase from Streptococcus pneumoniae serotype 2 (strain D39 / NCTC 7466).